A 349-amino-acid chain; its full sequence is ATPase GET3 (349 aa).

26 to 33 (KGGVGKTT) is a binding site for ATP. Asp-57 is a catalytic residue. Residues Glu-243 and Asn-270 each contribute to the ATP site. Positions 280 and 283 each coordinate Zn(2+).

It belongs to the arsA ATPase family. In terms of assembly, homodimer. Component of the Golgi to ER traffic (GET) complex, which is composed of GET1, GET2 and GET3. Within the complex, GET1 and GET2 form a heterotetramer which is stabilized by phosphatidylinositol binding and which binds to the GET3 homodimer. Interacts with the chloride channel protein GEF1.

The protein localises to the cytoplasm. It is found in the endoplasmic reticulum. It localises to the golgi apparatus. Its function is as follows. ATPase required for the post-translational delivery of tail-anchored (TA) proteins to the endoplasmic reticulum. Recognizes and selectively binds the transmembrane domain of TA proteins in the cytosol. This complex then targets to the endoplasmic reticulum by membrane-bound receptors GET1 and GET2, where the tail-anchored protein is released for insertion. This process is regulated by ATP binding and hydrolysis. ATP binding drives the homodimer towards the closed dimer state, facilitating recognition of newly synthesized TA membrane proteins. ATP hydrolysis is required for insertion. Subsequently, the homodimer reverts towards the open dimer state, lowering its affinity for the GET1-GET2 receptor, and returning it to the cytosol to initiate a new round of targeting. Cooperates with the HDEL receptor ERD2 to mediate the ATP-dependent retrieval of resident ER proteins that contain a C-terminal H-D-E-L retention signal from the Golgi to the ER. Involved in low-level resistance to the oxyanions arsenite and arsenate, and in heat tolerance. This chain is ATPase GET3, found in Clavispora lusitaniae (strain ATCC 42720) (Yeast).